A 461-amino-acid chain; its full sequence is Aspartyl/glutamyl-tRNA(Asn/Gln) amidotransferase subunit B (461 aa).

The protein belongs to the GatB/GatE family. GatB subfamily. In terms of assembly, heterotrimer of A, B and C subunits.

The enzyme catalyses L-glutamyl-tRNA(Gln) + L-glutamine + ATP + H2O = L-glutaminyl-tRNA(Gln) + L-glutamate + ADP + phosphate + H(+). It carries out the reaction L-aspartyl-tRNA(Asn) + L-glutamine + ATP + H2O = L-asparaginyl-tRNA(Asn) + L-glutamate + ADP + phosphate + 2 H(+). Allows the formation of correctly charged Asn-tRNA(Asn) or Gln-tRNA(Gln) through the transamidation of misacylated Asp-tRNA(Asn) or Glu-tRNA(Gln) in organisms which lack either or both of asparaginyl-tRNA or glutaminyl-tRNA synthetases. The reaction takes place in the presence of glutamine and ATP through an activated phospho-Asp-tRNA(Asn) or phospho-Glu-tRNA(Gln). This is Aspartyl/glutamyl-tRNA(Asn/Gln) amidotransferase subunit B from Methanopyrus kandleri (strain AV19 / DSM 6324 / JCM 9639 / NBRC 100938).